The following is a 204-amino-acid chain: uncharacterized protein (204 aa).

Polar residues predominate over residues 1–10 (MQQAITQQEK). 2 disordered regions span residues 1 to 20 (MQQA…LPNR) and 70 to 99 (DEAR…KNTE). The region spanning 131-204 (VRDSKKFGLQ…TVTDCVVIGM (74 aa)) is the SPOR domain.

It to E.coli FtsN repeat regions.

This is an uncharacterized protein from Haemophilus influenzae (strain ATCC 51907 / DSM 11121 / KW20 / Rd).